A 565-amino-acid chain; its full sequence is Arginine--tRNA ligase (565 aa).

The 'HIGH' region motif lies at 128–138 (ANPTGPLHVGH).

It belongs to the class-I aminoacyl-tRNA synthetase family. Monomer.

It is found in the cytoplasm. It catalyses the reaction tRNA(Arg) + L-arginine + ATP = L-arginyl-tRNA(Arg) + AMP + diphosphate. The chain is Arginine--tRNA ligase from Albidiferax ferrireducens (strain ATCC BAA-621 / DSM 15236 / T118) (Rhodoferax ferrireducens).